A 21-amino-acid chain; its full sequence is Bibrotoxin (21 aa).

Cystine bridges form between Cys-1-Cys-15 and Cys-3-Cys-11.

This sequence belongs to the endothelin/sarafotoxin family. In terms of tissue distribution, expressed by the venom gland.

The protein localises to the secreted. Functionally, vasoconstrictor activity. These toxins cause cardiac arrest probably as a result of coronary vasospasm. May act by displaying agonistic activities towards endothelin-1 and -2 receptors (EDNRA and EDNRB). This chain is Bibrotoxin, found in Atractaspis bibronii (Bibron's mole viper).